The following is a 428-amino-acid chain: Histidinol dehydrogenase (428 aa).

Positions 126, 188, and 211 each coordinate NAD(+). Residues Ser234, Gln256, and His259 each coordinate substrate. Zn(2+) is bound by residues Gln256 and His259. Residues Glu324 and His325 each act as proton acceptor in the active site. Residues His325, Asp358, Glu412, and His417 each coordinate substrate. Position 358 (Asp358) interacts with Zn(2+). His417 is a Zn(2+) binding site.

This sequence belongs to the histidinol dehydrogenase family. It depends on Zn(2+) as a cofactor.

The enzyme catalyses L-histidinol + 2 NAD(+) + H2O = L-histidine + 2 NADH + 3 H(+). The protein operates within amino-acid biosynthesis; L-histidine biosynthesis; L-histidine from 5-phospho-alpha-D-ribose 1-diphosphate: step 9/9. Its function is as follows. Catalyzes the sequential NAD-dependent oxidations of L-histidinol to L-histidinaldehyde and then to L-histidine. The polypeptide is Histidinol dehydrogenase (Chlorobaculum tepidum (strain ATCC 49652 / DSM 12025 / NBRC 103806 / TLS) (Chlorobium tepidum)).